A 52-amino-acid polypeptide reads, in one-letter code: Dibenzothiophene metabolism operon protein NahQ/DoxH (52 aa).

The protein operates within aromatic compound metabolism; naphthalene degradation. In terms of biological role, may be involved in the conversion of 2-hydroxy-4-(2'-oxo-3,5-cyclohexadienyl)-buta-2,4-dienoate to cis-O-hydroxybenzylidenepyruvate. DoxH and DoxJ encode different enzymes that may have interchangeable functions. The protein is Dibenzothiophene metabolism operon protein NahQ/DoxH (nahQ) of Pseudomonas putida (Arthrobacter siderocapsulatus).